The following is a 359-amino-acid chain: Probable RNA methyltransferase RPD_2859 (359 aa).

The active-site Proton acceptor is Glu-99. Positions 105 to 330 (RFDGHTACIS…PVVVRDTQGR (226 aa)) constitute a Radical SAM core domain. Cys-112 and Cys-336 are oxidised to a cystine. Residues Cys-119, Cys-123, and Cys-126 each contribute to the [4Fe-4S] cluster site. Residues 162-163 (GE), Ser-194, 217-219 (SLH), and Asn-293 each bind S-adenosyl-L-methionine. The active-site S-methylcysteine intermediate is Cys-336.

This sequence belongs to the radical SAM superfamily. RlmN family. It depends on [4Fe-4S] cluster as a cofactor.

Its subcellular location is the cytoplasm. The sequence is that of Probable RNA methyltransferase RPD_2859 from Rhodopseudomonas palustris (strain BisB5).